The following is a 669-amino-acid chain: Trissin receptor (669 aa).

Over residues Met1 to Glu15 the composition is skewed to polar residues. Positions Met1–Pro90 are disordered. Residues Met1–Arg184 lie on the Extracellular side of the membrane. A compositionally biased stretch (low complexity) spans Asn55–Gln74. A glycan (N-linked (GlcNAc...) asparagine) is linked at Asn66. Residues His79–Leu89 show a composition bias toward pro residues. Asn120 and Asn130 each carry an N-linked (GlcNAc...) asparagine glycan. A helical transmembrane segment spans residues Ile185 to Val205. Over Ile206–Ser217 the chain is Cytoplasmic. Residues Ile218–Val238 traverse the membrane as a helical segment. At Met239–Thr269 the chain is on the extracellular side. Asn241 is a glycosylation site (N-linked (GlcNAc...) asparagine). An intrachain disulfide couples Cys257 to Cys340. The chain crosses the membrane as a helical span at residues Ala270 to Ile290. Topologically, residues Thr291–Arg302 are cytoplasmic. Residues Met303–Ser323 traverse the membrane as a helical segment. Over Lys324–Lys350 the chain is Extracellular. The chain crosses the membrane as a helical span at residues Leu351–Leu371. Over Tyr372–Gly552 the chain is Cytoplasmic. Low complexity predominate over residues Val390–Pro401. 2 disordered regions span residues Val390 to Ser481 and Ala515 to Thr537. Basic residues predominate over residues Met414–His429. Residues Val441–Gly454 are compositionally biased toward gly residues. The segment covering Pro455–Lys470 has biased composition (low complexity). Gly residues predominate over residues Ser524–Ala534. The chain crosses the membrane as a helical span at residues Val553 to Ala573. Residues Arg574–Thr595 are Extracellular-facing. Residues Pro596–Leu616 traverse the membrane as a helical segment. Residues Ser617–Leu669 lie on the Cytoplasmic side of the membrane. A disordered region spans residues Gly635 to Leu669. Residues Gln653–Leu669 show a composition bias toward polar residues.

It belongs to the G-protein coupled receptor 1 family.

It localises to the cell membrane. Functionally, G-protein coupled receptor which is activated by the Trissin peptide in vitro, leading to increased intracellular calcium ion levels. The polypeptide is Trissin receptor (Drosophila melanogaster (Fruit fly)).